A 197-amino-acid polypeptide reads, in one-letter code: Protein GrpE (197 aa).

Residues 1-39 are disordered; sequence MSSKEQKTPEGQAPEEIIMDQHEEIEAVEPEASAEQVDP.

It belongs to the GrpE family. As to quaternary structure, homodimer.

It localises to the cytoplasm. Its function is as follows. Participates actively in the response to hyperosmotic and heat shock by preventing the aggregation of stress-denatured proteins, in association with DnaK and GrpE. It is the nucleotide exchange factor for DnaK and may function as a thermosensor. Unfolded proteins bind initially to DnaJ; upon interaction with the DnaJ-bound protein, DnaK hydrolyzes its bound ATP, resulting in the formation of a stable complex. GrpE releases ADP from DnaK; ATP binding to DnaK triggers the release of the substrate protein, thus completing the reaction cycle. Several rounds of ATP-dependent interactions between DnaJ, DnaK and GrpE are required for fully efficient folding. In Escherichia coli O45:K1 (strain S88 / ExPEC), this protein is Protein GrpE.